The following is a 174-amino-acid chain: Crossover junction endodeoxyribonuclease RuvC (174 aa).

Active-site residues include aspartate 8, glutamate 67, and aspartate 139. Mg(2+)-binding residues include aspartate 8, glutamate 67, and aspartate 139.

It belongs to the RuvC family. Homodimer which binds Holliday junction (HJ) DNA. The HJ becomes 2-fold symmetrical on binding to RuvC with unstacked arms; it has a different conformation from HJ DNA in complex with RuvA. In the full resolvosome a probable DNA-RuvA(4)-RuvB(12)-RuvC(2) complex forms which resolves the HJ. Mg(2+) is required as a cofactor.

The protein localises to the cytoplasm. The catalysed reaction is Endonucleolytic cleavage at a junction such as a reciprocal single-stranded crossover between two homologous DNA duplexes (Holliday junction).. In terms of biological role, the RuvA-RuvB-RuvC complex processes Holliday junction (HJ) DNA during genetic recombination and DNA repair. Endonuclease that resolves HJ intermediates. Cleaves cruciform DNA by making single-stranded nicks across the HJ at symmetrical positions within the homologous arms, yielding a 5'-phosphate and a 3'-hydroxyl group; requires a central core of homology in the junction. The consensus cleavage sequence is 5'-(A/T)TT(C/G)-3'. Cleavage occurs on the 3'-side of the TT dinucleotide at the point of strand exchange. HJ branch migration catalyzed by RuvA-RuvB allows RuvC to scan DNA until it finds its consensus sequence, where it cleaves and resolves the cruciform DNA. The polypeptide is Crossover junction endodeoxyribonuclease RuvC (Pseudomonas putida (strain GB-1)).